We begin with the raw amino-acid sequence, 148 residues long: Hemoglobin subunit beta-2 (148 aa).

A Globin domain is found at 3–148; sequence EWTDAERTAI…VVSALCRQYH (146 aa). Heme b contacts are provided by histidine 64 and histidine 93.

In terms of assembly, heterotetramer of two alpha chains and two beta chains. As to expression, red blood cells.

Functionally, involved in oxygen transport from gills to the various peripheral tissues. This chain is Hemoglobin subunit beta-2 (ba2), found in Danio rerio (Zebrafish).